Here is an 88-residue protein sequence, read N- to C-terminus: MANTPSAKKAARKIERRTAVNRARRSRVRTYLRKLEDALTAGNKDAAVAAFKAAEPEIMRAVTKGVLHKNTASRKVSRLAARVRKISA.

The tract at residues 1–25 (MANTPSAKKAARKIERRTAVNRARR) is disordered.

The protein belongs to the bacterial ribosomal protein bS20 family.

In terms of biological role, binds directly to 16S ribosomal RNA. In Azorhizobium caulinodans (strain ATCC 43989 / DSM 5975 / JCM 20966 / LMG 6465 / NBRC 14845 / NCIMB 13405 / ORS 571), this protein is Small ribosomal subunit protein bS20.